The following is a 207-amino-acid chain: TM2 domain-containing protein 1 (207 aa).

A signal peptide spans 1–37 (MAAAWPSGPSAPEAVTARLVGVLWFVSVTTGPWGAVA). Over 40–128 (AGGEESLKCE…YSYKVAVALS (89 aa)) the chain is Extracellular. N-linked (GlcNAc...) asparagine glycosylation is found at Asn-72, Asn-75, Asn-87, and Asn-96. The 49-residue stretch at 118–166 (GYSYKVAVALSLFLGWLGADRFYLGYPALGLLKFCTVGFCGIGSLIDFI) folds into the TM2 domain. A helical transmembrane segment spans residues 129–149 (LFLGWLGADRFYLGYPALGLL). The Cytoplasmic segment spans residues 150–153 (KFCT). A helical membrane pass occupies residues 154–174 (VGFCGIGSLIDFILISMQIVG). Residues 175-207 (PSDGSSYIIDYYGTRLTRLSITNETFRKTQLYP) lie on the Extracellular side of the membrane. The N-linked (GlcNAc...) asparagine glycan is linked to Asn-197.

It belongs to the TM2 family. As to quaternary structure, interacts with APP beta-APP42 (amyloid-beta protein 42). Post-translationally, N-glycosylated. As to expression, widely expressed.

It localises to the membrane. Functionally, may participate in amyloid-beta-induced apoptosis via its interaction with beta-APP42. The polypeptide is TM2 domain-containing protein 1 (TM2D1) (Homo sapiens (Human)).